The sequence spans 635 residues: Threonine--tRNA ligase (635 aa).

Positions 1–61 (MVSIRLPDGS…DRDASLAIVT (61 aa)) constitute a TGS domain. Positions 242 to 533 (DHRKLGKQLD…LIEHHAGAMP (292 aa)) are catalytic. The Zn(2+) site is built by Cys333, His384, and His510.

Belongs to the class-II aminoacyl-tRNA synthetase family. In terms of assembly, homodimer. It depends on Zn(2+) as a cofactor.

It localises to the cytoplasm. It catalyses the reaction tRNA(Thr) + L-threonine + ATP = L-threonyl-tRNA(Thr) + AMP + diphosphate + H(+). Catalyzes the attachment of threonine to tRNA(Thr) in a two-step reaction: L-threonine is first activated by ATP to form Thr-AMP and then transferred to the acceptor end of tRNA(Thr). Also edits incorrectly charged L-seryl-tRNA(Thr). This chain is Threonine--tRNA ligase, found in Burkholderia orbicola (strain MC0-3).